The primary structure comprises 241 residues: 1-(5-phosphoribosyl)-5-[(5-phosphoribosylamino)methylideneamino] imidazole-4-carboxamide isomerase (241 aa).

Catalysis depends on Asp-8, which acts as the Proton acceptor. Asp-130 serves as the catalytic Proton donor.

It belongs to the HisA/HisF family.

Its subcellular location is the cytoplasm. It catalyses the reaction 1-(5-phospho-beta-D-ribosyl)-5-[(5-phospho-beta-D-ribosylamino)methylideneamino]imidazole-4-carboxamide = 5-[(5-phospho-1-deoxy-D-ribulos-1-ylimino)methylamino]-1-(5-phospho-beta-D-ribosyl)imidazole-4-carboxamide. The protein operates within amino-acid biosynthesis; L-histidine biosynthesis; L-histidine from 5-phospho-alpha-D-ribose 1-diphosphate: step 4/9. The polypeptide is 1-(5-phosphoribosyl)-5-[(5-phosphoribosylamino)methylideneamino] imidazole-4-carboxamide isomerase (Leptospira interrogans serogroup Icterohaemorrhagiae serovar copenhageni (strain Fiocruz L1-130)).